Here is a 928-residue protein sequence, read N- to C-terminus: Probable outer membrane protein pmp10 (928 aa).

A signal peptide spans 1–25 (MKSQFSWLVLSSTLACFTSCSTVFA). The region spanning 635-928 (TLCSDRGFWA…NVDLGGKFQF (294 aa)) is the Autotransporter domain.

It belongs to the PMP outer membrane protein family.

Its subcellular location is the secreted. It localises to the cell wall. The protein resides in the cell outer membrane. The protein is Probable outer membrane protein pmp10 (pmp10) of Chlamydia pneumoniae (Chlamydophila pneumoniae).